The following is a 589-amino-acid chain: TAF5-like RNA polymerase II p300/CBP-associated factor-associated factor 65 kDa subunit 5L (589 aa).

WD repeat units lie at residues 266-305 (NTEQ…LKSE), 340-379 (GHCG…NTVL), 382-421 (GHAY…PLRI), 424-463 (GHLA…SVRL), 466-505 (GHRG…LFKE), and 508-547 (GHTD…CNTP).

This sequence belongs to the WD repeat TAF5 family. As to quaternary structure, the PCAF complex is composed of a number of TBP-associated factors (TAFS), such as TAF5, TAF5L, TAF6, TAF6L, TAF9, TAF10 and TAF12, PCAF, and also PCAF-associated factors (PAFs), such as TADA2L/ADA2, TADA3L/ADA3 and SPT3. Component of the STAGA transcription coactivator-HAT complex, at least composed of SUPT3H, GCN5L2, TAF5L, TAF6L, SUPT7L, TADA3L, TAD1L, TAF10, TAF12, TRRAP and TAF9.

It localises to the nucleus. Its function is as follows. Functions as a component of the PCAF complex. The PCAF complex is capable of efficiently acetylating histones in a nucleosomal context. The PCAF complex could be considered as the human version of the yeast SAGA complex. With TAF6L, acts as an epigenetic regulator essential for somatic reprogramming. Regulates target genes through H3K9ac deposition and MYC recruitment which trigger MYC regulatory network to orchestrate gene expression programs to control embryonic stem cell state. In Mus musculus (Mouse), this protein is TAF5-like RNA polymerase II p300/CBP-associated factor-associated factor 65 kDa subunit 5L.